We begin with the raw amino-acid sequence, 82 residues long: Large ribosomal subunit protein uL23 (82 aa).

This sequence belongs to the universal ribosomal protein uL23 family. In terms of assembly, part of the 50S ribosomal subunit. Contacts protein L29.

In terms of biological role, binds to 23S rRNA. One of the proteins that surrounds the polypeptide exit tunnel on the outside of the ribosome. In Methanosarcina acetivorans (strain ATCC 35395 / DSM 2834 / JCM 12185 / C2A), this protein is Large ribosomal subunit protein uL23.